Here is a 431-residue protein sequence, read N- to C-terminus: MRVLLVGAGGRENAIAEVLARDAELYVVAGHKNPGIARLAKDYALAKETDVPRVLDFALKWGVDMAFIGPEAPLEKGIVNVLEENGVPTVGPTREAAMLETNKAFARWLMEEYKIPGRKLFKVFDDVSEMKSWIDDFGRPVVVKPLGLTGGKGVKVVGYQLKDNEEAKAYAEELIKRDGKVLIEERTDGVEFTFQVFTDGKRVVPMPLAQDYPHAYEGDVGPITGGMGSYSCEDHRLPFITKEDYEKALETLKATVEAMRKNGTPYKGILYGQFMLAKDEPKIIEFNARFGDPEAMNVLPILKRSLVEIGEEIVDGNLKGAEFERKATVVKYIAPKGYPTNPVRGIKLHVDEAKIREEGARVYYASLDENFRMLGSRALAVVGIADSLEEAERIASAGIRHVRGEIFYRKDVGTRESIARRIELVRAMRGE.

An ATP-grasp domain is found at 107–315 (RWLMEEYKIP…LVEIGEEIVD (209 aa)). Residue 134-193 (IDDFGRPVVVKPLGLTGGKGVKVVGYQLKDNEEAKAYAEELIKRDGKVLIEERTDGVEFT) coordinates ATP. Positions 273, 285, and 287 each coordinate Mg(2+). 3 residues coordinate Mn(2+): Q273, E285, and N287.

This sequence belongs to the GARS family. Mg(2+) serves as cofactor. It depends on Mn(2+) as a cofactor.

It catalyses the reaction 5-phospho-beta-D-ribosylamine + glycine + ATP = N(1)-(5-phospho-beta-D-ribosyl)glycinamide + ADP + phosphate + H(+). It functions in the pathway purine metabolism; IMP biosynthesis via de novo pathway; N(1)-(5-phospho-D-ribosyl)glycinamide from 5-phospho-alpha-D-ribose 1-diphosphate: step 2/2. The sequence is that of Phosphoribosylamine--glycine ligase from Thermococcus kodakarensis (strain ATCC BAA-918 / JCM 12380 / KOD1) (Pyrococcus kodakaraensis (strain KOD1)).